A 214-amino-acid chain; its full sequence is MSEEVPVIKLEDWKPRTKVGQLIKEGKINSMKELFERNLPIVEPEIVDVLLPKLRYDIVDIGIVQKQTDAGELSRYKVLIVMGNMDGYISYGTGKAKQLRVAIQKAIRDAKMRIIPVRRGCGSWECTCGESHSLPFIVSGKAGSVEVTLLPAPKGTGLVVGSVLKTFLSLAGLKDVWSRTKGSTYTHENFIKAAYIALYNTYRFVTPVDWGRMK.

The S5 DRBM domain occupies 54–117 (LRYDIVDIGI…RDAKMRIIPV (64 aa)).

This sequence belongs to the universal ribosomal protein uS5 family. As to quaternary structure, part of the 30S ribosomal subunit. Contacts protein S4.

Its function is as follows. With S4 and S12 plays an important role in translational accuracy. In Sulfolobus acidocaldarius (strain ATCC 33909 / DSM 639 / JCM 8929 / NBRC 15157 / NCIMB 11770), this protein is Small ribosomal subunit protein uS5.